The following is an 899-amino-acid chain: Alanine--tRNA ligase (899 aa).

Zn(2+) is bound by residues histidine 595, histidine 599, cysteine 703, and histidine 707.

The protein belongs to the class-II aminoacyl-tRNA synthetase family. The cofactor is Zn(2+).

It is found in the cytoplasm. The catalysed reaction is tRNA(Ala) + L-alanine + ATP = L-alanyl-tRNA(Ala) + AMP + diphosphate. Its function is as follows. Catalyzes the attachment of alanine to tRNA(Ala) in a two-step reaction: alanine is first activated by ATP to form Ala-AMP and then transferred to the acceptor end of tRNA(Ala). Also edits incorrectly charged Ser-tRNA(Ala) and Gly-tRNA(Ala) via its editing domain. This chain is Alanine--tRNA ligase, found in Caldivirga maquilingensis (strain ATCC 700844 / DSM 13496 / JCM 10307 / IC-167).